The primary structure comprises 27 residues: Antimicrobial peptide 1 (27 aa).

As to expression, expressed by the skin glands.

It localises to the secreted. Has very weak antimicrobial activity against Gram-positive bacterium S.aureus and Gram-negative bacterium E.coli and stronger activity against yeast C.albicans. Enhances the antibacterial activity of XT3. Has hemolytic activity against human red blood cells. This chain is Antimicrobial peptide 1, found in Xenopus tropicalis (Western clawed frog).